A 348-amino-acid polypeptide reads, in one-letter code: Sulfate/thiosulfate import ATP-binding protein CysA (348 aa).

Residues 3-237 enclose the ABC transporter domain; it reads IEVRNIVKEF…PASAFVHGFI (235 aa). 35–42 is an ATP binding site; that stretch reads GPSGSGKT.

It belongs to the ABC transporter superfamily. Sulfate/tungstate importer (TC 3.A.1.6) family. As to quaternary structure, the complex is composed of two ATP-binding proteins (CysA), two transmembrane proteins (CysT and CysW) and a solute-binding protein (CysP).

The protein localises to the cell inner membrane. It carries out the reaction sulfate(out) + ATP + H2O = sulfate(in) + ADP + phosphate + H(+). It catalyses the reaction thiosulfate(out) + ATP + H2O = thiosulfate(in) + ADP + phosphate + H(+). In terms of biological role, part of the ABC transporter complex CysAWTP involved in sulfate/thiosulfate import. Responsible for energy coupling to the transport system. This chain is Sulfate/thiosulfate import ATP-binding protein CysA, found in Rhodopseudomonas palustris (strain ATCC BAA-98 / CGA009).